The sequence spans 386 residues: Dual-specificity RNA methyltransferase RlmN (386 aa).

Residue Glu-96 is the Proton acceptor of the active site. One can recognise a Radical SAM core domain in the interval 102–340; that stretch reads ENDRATLCVS…VITRRTRGED (239 aa). Cysteines 109 and 345 form a disulfide. Positions 116, 120, and 123 each coordinate [4Fe-4S] cluster. S-adenosyl-L-methionine contacts are provided by residues 170-171, Ser-202, 224-226, and Asn-302; these read GE and SIH. Residue Cys-345 is the S-methylcysteine intermediate of the active site.

The protein belongs to the radical SAM superfamily. RlmN family. It depends on [4Fe-4S] cluster as a cofactor.

Its subcellular location is the cytoplasm. The enzyme catalyses adenosine(2503) in 23S rRNA + 2 reduced [2Fe-2S]-[ferredoxin] + 2 S-adenosyl-L-methionine = 2-methyladenosine(2503) in 23S rRNA + 5'-deoxyadenosine + L-methionine + 2 oxidized [2Fe-2S]-[ferredoxin] + S-adenosyl-L-homocysteine. The catalysed reaction is adenosine(37) in tRNA + 2 reduced [2Fe-2S]-[ferredoxin] + 2 S-adenosyl-L-methionine = 2-methyladenosine(37) in tRNA + 5'-deoxyadenosine + L-methionine + 2 oxidized [2Fe-2S]-[ferredoxin] + S-adenosyl-L-homocysteine. Functionally, specifically methylates position 2 of adenine 2503 in 23S rRNA and position 2 of adenine 37 in tRNAs. m2A2503 modification seems to play a crucial role in the proofreading step occurring at the peptidyl transferase center and thus would serve to optimize ribosomal fidelity. The protein is Dual-specificity RNA methyltransferase RlmN of Colwellia psychrerythraea (strain 34H / ATCC BAA-681) (Vibrio psychroerythus).